Reading from the N-terminus, the 475-residue chain is Early growth response protein 1-B (475 aa).

Disordered regions lie at residues 109–180 (NVSS…TASI) and 264–285 (PSRM…RPYA). Residues 111 to 140 (SSSSAPSSSPSSSSSSSSSSSSQSPPLSCS) are compositionally biased toward low complexity. A compositionally biased stretch (polar residues) spans 170–179 (QPFQNASTAS). 3 C2H2-type zinc fingers span residues 284-308 (YACP…IRIH), 314-336 (FQCR…IRTH), and 342-364 (FACD…TKIH). Residues 355–379 (DERKRHTKIHLRQKDKKADKATPVS) are disordered. The span at 359-369 (RHTKIHLRQKD) shows a compositional bias: basic residues.

Belongs to the EGR C2H2-type zinc-finger protein family.

It is found in the nucleus. The protein resides in the cytoplasm. Functionally, transcriptional regulator. Recognizes and binds to the DNA sequence 5'-GCG(T/G)GGGCG-3'(EGR-site) in the promoter region of target genes. Binds double-stranded target DNA, irrespective of the cytosine methylation status. Regulates the transcription of numerous target genes, and thereby plays an important role in regulating the response to growth factors, DNA damage, and ischemia. Plays a role in the regulation of cell survival, proliferation and cell death. Mediates responses to ischemia and hypoxia; regulates the expression of proteins that are involved in inflammatory processes. Plays a role in regulating the expression of circadian clock genes. The protein is Early growth response protein 1-B (egr1-b) of Xenopus laevis (African clawed frog).